A 396-amino-acid chain; its full sequence is S100P-binding protein (396 aa).

The disordered stretch occupies residues 145–249 (CDPVLDKDKI…RKNSGSHKSG (105 aa)). Composition is skewed to basic and acidic residues over residues 148 to 161 (VLDKDKIDSSKETE) and 168 to 185 (EQTREDDPQPNESKRCTE). Composition is skewed to polar residues over residues 202-215 (SSPSNNNIEQTASD) and 227-246 (VFSQISNHSEVPNRKNSGSH).

As to quaternary structure, interacts with S100P.

The protein localises to the nucleus. The sequence is that of S100P-binding protein from Mus musculus (Mouse).